The following is a 526-amino-acid chain: Lysine--tRNA ligase (526 aa).

Mg(2+) is bound by residues glutamate 431 and glutamate 438.

The protein belongs to the class-II aminoacyl-tRNA synthetase family. As to quaternary structure, homodimer. Mg(2+) serves as cofactor.

The protein resides in the cytoplasm. It carries out the reaction tRNA(Lys) + L-lysine + ATP = L-lysyl-tRNA(Lys) + AMP + diphosphate. This is Lysine--tRNA ligase from Chlamydia trachomatis serovar L2b (strain UCH-1/proctitis).